Consider the following 83-residue polypeptide: UPF0512 protein I (83 aa).

This sequence belongs to the UPF0512 family.

The protein is UPF0512 protein I of Dictyostelium discoideum (Social amoeba).